The chain runs to 86 residues: SEED MATURATION PROTEIN 1 (86 aa).

A disordered region spans residues 52–86 (RIEKGKEQSAASGDQTQIQRDIKDIKGTRTDDSPR). The segment covering 60–70 (SAASGDQTQIQ) has biased composition (polar residues). The segment covering 71-86 (RDIKDIKGTRTDDSPR) has biased composition (basic and acidic residues).

It belongs to the LEA type 3 family.

Its function is as follows. Protein chaperone involved in seed maturation and dormancy maintenance after high temperature fluctuation (e.g. secondary dormancy after 3 days at 40 degrees Celsius), probably by protecting heat labile proteins required for secondary dormancy (e.g. G6PDH, HOP3, SR45, ECP63, SCL33, RPL32B, ChlADR1, MSBP1, MBF1B, At3g01690, At1g15280, At1g15290, At2g31410, At1g11630, At1g65090, EMB2279, EMB1674 and RPL35C). This chain is SEED MATURATION PROTEIN 1, found in Arabidopsis thaliana (Mouse-ear cress).